Consider the following 123-residue polypeptide: Large ribosomal subunit protein bL12 (123 aa).

It belongs to the bacterial ribosomal protein bL12 family. Homodimer. Part of the ribosomal stalk of the 50S ribosomal subunit. Forms a multimeric L10(L12)X complex, where L10 forms an elongated spine to which 2 to 4 L12 dimers bind in a sequential fashion. Binds GTP-bound translation factors.

Functionally, forms part of the ribosomal stalk which helps the ribosome interact with GTP-bound translation factors. Is thus essential for accurate translation. The chain is Large ribosomal subunit protein bL12 from Dechloromonas aromatica (strain RCB).